We begin with the raw amino-acid sequence, 221 residues long: Thiamine-phosphate synthase (221 aa).

4-amino-2-methyl-5-(diphosphooxymethyl)pyrimidine-binding positions include 47–51 (QYREK) and Asn-79. Mg(2+) contacts are provided by Asp-80 and Asp-99. Thr-118 contacts 4-amino-2-methyl-5-(diphosphooxymethyl)pyrimidine. Residue 144–146 (SFT) participates in 2-[(2R,5Z)-2-carboxy-4-methylthiazol-5(2H)-ylidene]ethyl phosphate binding. Lys-147 contributes to the 4-amino-2-methyl-5-(diphosphooxymethyl)pyrimidine binding site. 2-[(2R,5Z)-2-carboxy-4-methylthiazol-5(2H)-ylidene]ethyl phosphate contacts are provided by residues Gly-175 and 195–196 (VT).

Belongs to the thiamine-phosphate synthase family. It depends on Mg(2+) as a cofactor.

The enzyme catalyses 2-[(2R,5Z)-2-carboxy-4-methylthiazol-5(2H)-ylidene]ethyl phosphate + 4-amino-2-methyl-5-(diphosphooxymethyl)pyrimidine + 2 H(+) = thiamine phosphate + CO2 + diphosphate. It carries out the reaction 2-(2-carboxy-4-methylthiazol-5-yl)ethyl phosphate + 4-amino-2-methyl-5-(diphosphooxymethyl)pyrimidine + 2 H(+) = thiamine phosphate + CO2 + diphosphate. It catalyses the reaction 4-methyl-5-(2-phosphooxyethyl)-thiazole + 4-amino-2-methyl-5-(diphosphooxymethyl)pyrimidine + H(+) = thiamine phosphate + diphosphate. It functions in the pathway cofactor biosynthesis; thiamine diphosphate biosynthesis; thiamine phosphate from 4-amino-2-methyl-5-diphosphomethylpyrimidine and 4-methyl-5-(2-phosphoethyl)-thiazole: step 1/1. Functionally, condenses 4-methyl-5-(beta-hydroxyethyl)thiazole monophosphate (THZ-P) and 2-methyl-4-amino-5-hydroxymethyl pyrimidine pyrophosphate (HMP-PP) to form thiamine monophosphate (TMP). This is Thiamine-phosphate synthase from Caldicellulosiruptor saccharolyticus (strain ATCC 43494 / DSM 8903 / Tp8T 6331).